A 45-amino-acid chain; its full sequence is Unknown protein from spots 23/28/205 of 2D-PAGE of thylakoid (45 aa).

The protein resides in the plastid. It localises to the chloroplast thylakoid. The protein is Unknown protein from spots 23/28/205 of 2D-PAGE of thylakoid of Pisum sativum (Garden pea).